The following is a 743-amino-acid chain: Neutral ceramidase (743 aa).

The Cytoplasmic segment spans residues 1-14 (MASKSRRLSGLEIS). A helical; Signal-anchor for type II membrane protein transmembrane segment spans residues 15–35 (LIVLFLLMTAVSVALITVLAL). Topologically, residues 36–743 (KQESDKKEEV…FKVARSFYYF (708 aa)) are lumenal. The segment at 40–60 (DKKEEVTPEEPSPSVTPPEKP) is disordered. A compositionally biased stretch (pro residues) spans 49-59 (EPSPSVTPPEK). Residues His-151 and His-260 each coordinate Zn(2+). Asn-265 is a glycosylation site (N-linked (GlcNAc...) asparagine). The Nucleophile role is filled by Ser-312. 2 disulfides stabilise this stretch: Cys-320/Cys-334 and Cys-327/Cys-342. N-linked (GlcNAc...) asparagine glycosylation is found at Asn-331, Asn-389, Asn-398, and Asn-451. A disulfide bridge connects residues Cys-406 and Cys-456. Zn(2+)-binding residues include Glu-498 and Tyr-538. An N-linked (GlcNAc...) asparagine glycan is attached at Asn-661. Ca(2+) contacts are provided by Asp-672, Ser-674, and Thr-677. Asn-720 carries N-linked (GlcNAc...) asparagine glycosylation.

This sequence belongs to the neutral ceramidase family. Zn(2+) is required as a cofactor. N-glycosylated. In terms of processing, O-glycosylated. As to expression, detected in intestine (at protein level).

The protein resides in the cell membrane. Its subcellular location is the membrane raft. It localises to the membrane. It is found in the caveola. The protein localises to the golgi apparatus membrane. The protein resides in the mitochondrion. Its subcellular location is the secreted. It localises to the extracellular exosome. The enzyme catalyses an N-acylsphing-4-enine + H2O = sphing-4-enine + a fatty acid. The catalysed reaction is N-dodecanoylsphing-4-enine + H2O = dodecanoate + sphing-4-enine. The protein operates within lipid metabolism; sphingolipid metabolism. Plasma membrane ceramidase that hydrolyzes sphingolipid ceramides into sphingosine and free fatty acids at neutral pH. Ceramides, sphingosine, and its phosphorylated form sphingosine-1-phosphate are bioactive lipids that mediate cellular signaling pathways regulating several biological processes including cell proliferation, apoptosis and differentiation. Also catalyzes the reverse reaction allowing the synthesis of ceramides from fatty acids and sphingosine. Together with sphingomyelinase, participates in the production of sphingosine and sphingosine-1-phosphate from the degradation of sphingomyelin, a sphingolipid enriched in the plasma membrane of cells. Also participates in the hydrolysis of ceramides from the extracellular milieu allowing the production of sphingosine-1-phosphate inside and outside cells. This chain is Neutral ceramidase (asah2), found in Danio rerio (Zebrafish).